A 141-amino-acid polypeptide reads, in one-letter code: Nucleoside diphosphate kinase (141 aa).

6 residues coordinate ATP: K9, F57, R85, T91, R102, and N112. The Pros-phosphohistidine intermediate role is filled by H115.

The protein belongs to the NDK family. As to quaternary structure, homotetramer. Requires Mg(2+) as cofactor.

Its subcellular location is the cytoplasm. It catalyses the reaction a 2'-deoxyribonucleoside 5'-diphosphate + ATP = a 2'-deoxyribonucleoside 5'-triphosphate + ADP. The enzyme catalyses a ribonucleoside 5'-diphosphate + ATP = a ribonucleoside 5'-triphosphate + ADP. Its function is as follows. Major role in the synthesis of nucleoside triphosphates other than ATP. The ATP gamma phosphate is transferred to the NDP beta phosphate via a ping-pong mechanism, using a phosphorylated active-site intermediate. This Chloroherpeton thalassium (strain ATCC 35110 / GB-78) protein is Nucleoside diphosphate kinase.